The following is a 761-amino-acid chain: Neutral ceramidase (761 aa).

Over 1–11 (MAKRTFSSLEA) the chain is Cytoplasmic. Residues 12–32 (FLIFLLVMMTAITVALLTLLF) form a helical; Signal-anchor for type II membrane protein membrane-spanning segment. The Lumenal segment spans residues 33 to 761 (VTSGTIENHK…ISSPFEIVTT (729 aa)). The interval 43-76 (DSGNHWVSTTQGPTTTQSSPTTQTPTTQTPDLPP) is disordered. Residues 50 to 76 (STTQGPTTTQSSPTTQTPTTQTPDLPP) are compositionally biased toward low complexity. Residues Thr51, Thr52, Thr56, Thr57, and Thr58 are each glycosylated (O-linked (GalNAc...) threonine). O-linked (GalNAc...) serine glycosylation is found at Ser60 and Ser61. Thr63, Thr64, Thr66, Thr68, Thr69, and Thr71 each carry an O-linked (GalNAc...) threonine glycan. Leu115 is a binding site for Ca(2+). Residue His175 coordinates Zn(2+). Asn198 is a glycosylation site (N-linked (GlcNAc...) asparagine). His284 is a Zn(2+) binding site. Catalysis depends on Ser335, which acts as the Nucleophile. Cystine bridges form between Cys343/Cys357 and Cys350/Cys365. 2 N-linked (GlcNAc...) asparagine glycosylation sites follow: Asn412 and Asn449. A disulfide bond links Cys429 and Cys479. Residues Glu521 and Tyr560 each contribute to the Zn(2+) site. 3 residues coordinate Ca(2+): Asp693, Ser695, and Thr698. Residues 751-761 (GISSPFEIVTT) are required for correct folding and localization.

The protein belongs to the neutral ceramidase family. Requires Zn(2+) as cofactor. Post-translationally, proteolytic cleavage of the N-terminus removes the signal-anchor and produces a soluble form of the protein. In terms of processing, N-glycosylated. Required for enzyme activity. O-glycosylated. Required to retain it as a type II membrane protein at the cell surface. Post-translationally, phosphorylated. May prevent ubiquitination and subsequent degradation. In terms of processing, ubiquitinated, leading to its degradation by the proteasome. Ubiquitination is triggered by nitric oxide. Highly expressed in brain, kidney and heart. Expressed at lower level in other tissues such as liver. Expressed in intestine, kidney and liver (at protein level). Localizes in the epithelia of the jejunum and ileum.

The protein localises to the cell membrane. It localises to the membrane raft. It is found in the membrane. The protein resides in the caveola. Its subcellular location is the golgi apparatus membrane. The protein localises to the mitochondrion. It localises to the secreted. It is found in the extracellular exosome. It carries out the reaction an N-acylsphing-4-enine + H2O = sphing-4-enine + a fatty acid. The catalysed reaction is N-hexadecanoylsphing-4-enine + H2O = sphing-4-enine + hexadecanoate. It catalyses the reaction N-tetradecanoylsphing-4-enine + H2O = tetradecanoate + sphing-4-enine. The enzyme catalyses N-(9Z-octadecenoyl)-sphing-4-enine + H2O = sphing-4-enine + (9Z)-octadecenoate. It carries out the reaction N-(15Z-tetracosenoyl)-sphing-4-enine + H2O = (15Z)-tetracosenoate + sphing-4-enine. The catalysed reaction is N-octanoylsphing-4-enine + H2O = octanoate + sphing-4-enine. It catalyses the reaction N-dodecanoylsphing-4-enine + H2O = dodecanoate + sphing-4-enine. The enzyme catalyses N-(hexanoyl)sphing-4-enine + H2O = hexanoate + sphing-4-enine. It carries out the reaction N-octadecanoylsphing-4-enine + H2O = sphing-4-enine + octadecanoate. The catalysed reaction is sphinganine + hexadecanoate = N-hexadecanoylsphinganine + H2O. It catalyses the reaction N-(octadecanoyl)-sphinganine + H2O = sphinganine + octadecanoate. The protein operates within lipid metabolism; sphingolipid metabolism. With respect to regulation, the reverse reaction is inhibited by Zn(2+) and Cu(2+). Inhibited by cardiolipin and phosphatidic acid. Functionally, plasma membrane ceramidase that hydrolyzes sphingolipid ceramides into sphingosine and free fatty acids at neutral pH. Ceramides, sphingosine, and its phosphorylated form sphingosine-1-phosphate are bioactive lipids that mediate cellular signaling pathways regulating several biological processes including cell proliferation, apoptosis and differentiation. Also catalyzes the reverse reaction allowing the synthesis of ceramides from fatty acids and sphingosine. Together with sphingomyelinase, participates in the production of sphingosine and sphingosine-1-phosphate from the degradation of sphingomyelin, a sphingolipid enriched in the plasma membrane of cells. Also participates in the hydrolysis of ceramides from the extracellular milieu allowing the production of sphingosine-1-phosphate inside and outside cells. This is the case for instance with the digestion of dietary sphingolipids in the intestinal tract. The chain is Neutral ceramidase (Asah2) from Rattus norvegicus (Rat).